A 191-amino-acid chain; its full sequence is Large ribosomal subunit protein bL9 (191 aa).

Positions 150 to 191 (EAERQAKGESLTSADAIYGVDEDALRPEDFFDPDADRDGDDE) are disordered. Positions 179–191 (FFDPDADRDGDDE) are enriched in acidic residues.

It belongs to the bacterial ribosomal protein bL9 family.

In terms of biological role, binds to the 23S rRNA. In Allorhizobium ampelinum (strain ATCC BAA-846 / DSM 112012 / S4) (Agrobacterium vitis (strain S4)), this protein is Large ribosomal subunit protein bL9.